A 190-amino-acid polypeptide reads, in one-letter code: Threonylcarbamoyl-AMP synthase (190 aa).

Residues 7-190 (GDAIAAAIDV…ALTGELFRQG (184 aa)) enclose the YrdC-like domain.

It belongs to the SUA5 family. TsaC subfamily.

Its subcellular location is the cytoplasm. It carries out the reaction L-threonine + hydrogencarbonate + ATP = L-threonylcarbamoyladenylate + diphosphate + H2O. Functionally, required for the formation of a threonylcarbamoyl group on adenosine at position 37 (t(6)A37) in tRNAs that read codons beginning with adenine. Catalyzes the conversion of L-threonine, HCO(3)(-)/CO(2) and ATP to give threonylcarbamoyl-AMP (TC-AMP) as the acyladenylate intermediate, with the release of diphosphate. In Escherichia coli O6:H1 (strain CFT073 / ATCC 700928 / UPEC), this protein is Threonylcarbamoyl-AMP synthase.